Here is a 586-residue protein sequence, read N- to C-terminus: uncharacterized protein (586 aa).

2 disordered regions span residues 17–64 (VRRT…ETEE) and 80–123 (HSCS…GGAN). Polar residues predominate over residues 28-37 (PSTSGSIAWT). 2 stretches are compositionally biased toward low complexity: residues 38–52 (SSES…VSSS) and 80–91 (HSCSAATTSQQS). The segment covering 94-110 (QSKEHRIGGIKKEEKPI) has biased composition (basic and acidic residues). The span at 112-123 (MGGGSSENGGAN) shows a compositional bias: gly residues. A run of 12 helical transmembrane segments spans residues 151-171 (WVIL…WIQY), 191-211 (WTSM…AWLL), 218-238 (LSVL…LLST), 243-263 (FWVT…TLGI), 283-303 (LGVF…PLIV), 317-337 (TLFL…ICFF), 375-395 (FVIL…ISTL), 413-433 (YVGL…GFIL), 441-461 (LTTI…TLTI), 466-486 (MVLV…YLPI), 513-533 (IFGI…GTFT), and 536-556 (IIMS…REDL).

This sequence belongs to the major facilitator superfamily. Feline leukemia virus subgroup C receptor (TC 2.A.1.28.1) family.

The protein localises to the membrane. This is an uncharacterized protein from Caenorhabditis elegans.